A 178-amino-acid polypeptide reads, in one-letter code: UPF0228 protein MA_4223 (178 aa).

It belongs to the UPF0228 family.

The protein is UPF0228 protein MA_4223 of Methanosarcina acetivorans (strain ATCC 35395 / DSM 2834 / JCM 12185 / C2A).